A 425-amino-acid polypeptide reads, in one-letter code: Serine--tRNA ligase (425 aa).

228–230 contributes to the L-serine binding site; the sequence is TAE. 259 to 261 serves as a coordination point for ATP; the sequence is RSE. Position 282 (glutamate 282) interacts with L-serine. An ATP-binding site is contributed by 346–349; sequence EIAS. Position 382 (serine 382) interacts with L-serine.

The protein belongs to the class-II aminoacyl-tRNA synthetase family. Type-1 seryl-tRNA synthetase subfamily. In terms of assembly, homodimer. The tRNA molecule binds across the dimer.

It is found in the cytoplasm. It carries out the reaction tRNA(Ser) + L-serine + ATP = L-seryl-tRNA(Ser) + AMP + diphosphate + H(+). The catalysed reaction is tRNA(Sec) + L-serine + ATP = L-seryl-tRNA(Sec) + AMP + diphosphate + H(+). The protein operates within aminoacyl-tRNA biosynthesis; selenocysteinyl-tRNA(Sec) biosynthesis; L-seryl-tRNA(Sec) from L-serine and tRNA(Sec): step 1/1. Functionally, catalyzes the attachment of serine to tRNA(Ser). Is also able to aminoacylate tRNA(Sec) with serine, to form the misacylated tRNA L-seryl-tRNA(Sec), which will be further converted into selenocysteinyl-tRNA(Sec). The chain is Serine--tRNA ligase from Rickettsia canadensis (strain McKiel).